We begin with the raw amino-acid sequence, 213 residues long: MARKETVEAVKKALASRPKRNFSESVDLAINLKNIDMSQPKNRVDEDIILPSGLGKTIKVAVFAKGEVAVNAEKAGADYVFPPEEIEKLGADKPRAKKLASEVNFFIAETAYMPTIGKRLGTVLGPRGKMPAPLPPQADVTALITRQKKSIKIRSKDRLTFHATIGTETMTPEEIAENIDAIIKRLETKLEKGKQNIHAIYVKTTMGPAVKVM.

Belongs to the universal ribosomal protein uL1 family. Part of the 50S ribosomal subunit.

Its function is as follows. Binds directly to 23S rRNA. Probably involved in E site tRNA release. In terms of biological role, protein L1 is also a translational repressor protein, it controls the translation of its operon by binding to its mRNA. This Methanocella arvoryzae (strain DSM 22066 / NBRC 105507 / MRE50) protein is Large ribosomal subunit protein uL1.